We begin with the raw amino-acid sequence, 341 residues long: Limbic system-associated membrane protein (341 aa).

A signal peptide spans methionine 1–proline 28. Ig-like domains follow at residues valine 29–serine 122, proline 132–threonine 214, and proline 219–valine 304. N-linked (GlcNAc...) asparagine glycosylation is found at asparagine 40 and asparagine 66. A disulfide bridge links cysteine 53 with cysteine 111. The residue at position 94 (tyrosine 94) is a Phosphotyrosine. N-linked (GlcNAc...) asparagine glycans are attached at residues asparagine 136 and asparagine 148. 2 disulfide bridges follow: cysteine 153–cysteine 197 and cysteine 239–cysteine 290. 3 N-linked (GlcNAc...) asparagine glycosylation sites follow: asparagine 279, asparagine 287, and asparagine 300.

It belongs to the immunoglobulin superfamily. IgLON family.

Its subcellular location is the cell membrane. Its function is as follows. Mediates selective neuronal growth and axon targeting. Contributes to the guidance of developing axons and remodeling of mature circuits in the limbic system. Essential for normal growth of the hippocampal mossy fiber projection. This chain is Limbic system-associated membrane protein (Lsamp), found in Mus musculus (Mouse).